The sequence spans 337 residues: Protein RecA (337 aa).

An ATP-binding site is contributed by 66–73; it reads GPESSGKT.

The protein belongs to the RecA family.

Its subcellular location is the cytoplasm. Can catalyze the hydrolysis of ATP in the presence of single-stranded DNA, the ATP-dependent uptake of single-stranded DNA by duplex DNA, and the ATP-dependent hybridization of homologous single-stranded DNAs. It interacts with LexA causing its activation and leading to its autocatalytic cleavage. The polypeptide is Protein RecA (Mesomycoplasma hyopneumoniae (strain J / ATCC 25934 / NCTC 10110) (Mycoplasma hyopneumoniae)).